Consider the following 313-residue polypeptide: DNA-directed RNA polymerase subunit alpha (313 aa).

Positions 1 to 227 (MMLDVAPPRF…DFFGLFAEGY (227 aa)) are alpha N-terminal domain (alpha-NTD). The interval 242 to 313 (RPVITDERPI…YGYTLESGRE (72 aa)) is alpha C-terminal domain (alpha-CTD).

This sequence belongs to the RNA polymerase alpha chain family. In terms of assembly, homodimer. The RNAP catalytic core consists of 2 alpha, 1 beta, 1 beta' and 1 omega subunit. When a sigma factor is associated with the core the holoenzyme is formed, which can initiate transcription.

The enzyme catalyses RNA(n) + a ribonucleoside 5'-triphosphate = RNA(n+1) + diphosphate. In terms of biological role, DNA-dependent RNA polymerase catalyzes the transcription of DNA into RNA using the four ribonucleoside triphosphates as substrates. The protein is DNA-directed RNA polymerase subunit alpha of Rubrobacter xylanophilus (strain DSM 9941 / JCM 11954 / NBRC 16129 / PRD-1).